The following is a 1006-amino-acid chain: Unconventional myosin-Id (1006 aa).

An N-acetylalanine modification is found at Ala-2. The Myosin motor domain occupies 9 to 695; sequence FGKADFVLMD…TLFTLEELRA (687 aa). 102-109 provides a ligand contact to ATP; the sequence is GESGAGKT. A Phosphoserine modification is found at Ser-200. Tyr-536 carries the post-translational modification Phosphotyrosine. The tract at residues 572–594 is actin-binding; sequence MIALVDNLASKEPYYVRCIKPND. IQ domains follow at residues 699-719 and 721-741; these read IRIVLFLQKVWRGTLARMRYK and TKAALTIIRYYRHYKVKSYIQ. The TH1 domain maps to 812–1005; that stretch reads GQRADLGLQR…RSGFILSVPG (194 aa).

This sequence belongs to the TRAFAC class myosin-kinesin ATPase superfamily. Myosin family. Interacts (via the two IQ motifs) with calmodulin. Binds an additional calmodulin chain via a third, C-terminal region. Interacts with F-actin.

It localises to the cytoplasm. It is found in the perikaryon. The protein localises to the cell projection. The protein resides in the dendrite. Its subcellular location is the early endosome. It localises to the cell cortex. Unconventional myosin that functions as actin-based motor protein with ATPase activity. Plays a role in endosomal protein trafficking, and especially in the transfer of cargo proteins from early to recycling endosomes. Required for normal planar cell polarity in ciliated tracheal cells, for normal rotational polarity of cilia, and for coordinated, unidirectional ciliary movement in the trachea. Required for normal, polarized cilia organization in brain ependymal epithelial cells. The protein is Unconventional myosin-Id (MYO1D) of Canis lupus familiaris (Dog).